The following is a 198-amino-acid chain: Protein UNCMA_24250 (198 aa).

An AMMECR1 domain is found at 5 to 194 (EDGTLAVKTA…ETEPGGPVIE (190 aa)).

This Methanocella arvoryzae (strain DSM 22066 / NBRC 105507 / MRE50) protein is Protein UNCMA_24250.